Here is a 293-residue protein sequence, read N- to C-terminus: Probable metal transport system membrane protein TC_0698 (293 aa).

7 helical membrane passes run 18-38 (SLLAAFGASIAGGIVGSYIVV), 41-61 (IVSISGSIAHSILGGVGIALW), 68-88 (LPISPLHGAIASAIFVAICIG), 101-121 (IISMIWSIGMAVGMLCISKLP), 142-162 (DLYFLGILDLLIVATVSICHT), 186-206 (FLLLILTAITTVVLMYVMGVI), and 242-262 (FLGIILAYILDLPVGPIIAIL).

It belongs to the ABC-3 integral membrane protein family.

Its subcellular location is the cell inner membrane. Its function is as follows. Part of an ATP-driven transport system TC_0696/TC_0697/TC_0698 for a metal. The chain is Probable metal transport system membrane protein TC_0698 from Chlamydia muridarum (strain MoPn / Nigg).